A 150-amino-acid chain; its full sequence is Large ribosomal subunit protein uL15 (150 aa).

It belongs to the universal ribosomal protein uL15 family. In terms of assembly, part of the 50S ribosomal subunit.

Its function is as follows. Binds to the 23S rRNA. The protein is Large ribosomal subunit protein uL15 of Rickettsia typhi (strain ATCC VR-144 / Wilmington).